The chain runs to 765 residues: Dipeptidyl peptidase 4 (765 aa).

At 1–6 (MKTPWK) the chain is on the cytoplasmic side. A helical; Signal-anchor for type II membrane protein membrane pass occupies residues 7 to 29 (VLLGLLAIAALVTVITVPVVLLT). The Extracellular portion of the chain corresponds to 30–765 (KGNDASTDSR…HFLKQCFSLL (736 aa)). 9 N-linked (GlcNAc...) asparagine glycosylation sites follow: asparagine 84, asparagine 91, asparagine 149, asparagine 218, asparagine 228, asparagine 271, asparagine 280, asparagine 320, and asparagine 392. Cystine bridges form between cysteine 384/cysteine 393, cysteine 443/cysteine 446, and cysteine 453/cysteine 471. Asparagine 495 carries an N-linked (GlcNAc...) asparagine glycan. Serine 629 functions as the Charge relay system in the catalytic mechanism. A disulfide bridge links cysteine 648 with cysteine 761. An N-linked (GlcNAc...) asparagine glycan is attached at asparagine 684. Active-site charge relay system residues include aspartate 707 and histidine 739.

It belongs to the peptidase S9B family. DPPIV subfamily. In terms of assembly, monomer. Homodimer. Heterodimer with Seprase (FAP). Requires homodimerization for optimal dipeptidyl peptidase activity and T-cell costimulation. Found in a membrane raft complex, at least composed of BCL10, CARD11, DPP4 and IKBKB. Associates with collagen. Interacts with PTPRC; the interaction is enhanced in an interleukin-12-dependent manner in activated lymphocytes. Interacts (via extracellular domain) with ADA; does not inhibit its dipeptidyl peptidase activity. Interacts with CAV1 (via the N-terminus); the interaction is direct. Interacts (via cytoplasmic tail) with CARD11 (via PDZ domain); its homodimerization is necessary for interaction with CARD11. Interacts with IGF2R; the interaction is direct. Interacts with GPC3. Post-translationally, the soluble form (Dipeptidyl peptidase 4 soluble form also named SDPP) derives from the membrane form (Dipeptidyl peptidase 4 membrane form also named MDPP) by proteolytic processing. N- and O-Glycosylated. In terms of processing, phosphorylated. Mannose 6-phosphate residues in the carbohydrate moiety are necessary for interaction with IGF2R in activated T-cells. Mannose 6-phosphorylation is induced during T-cell activation. Intestinal epithelium, dendritic cells and several immune system tissues.

The protein localises to the secreted. It is found in the cell membrane. Its subcellular location is the apical cell membrane. The protein resides in the cell projection. It localises to the invadopodium membrane. The protein localises to the lamellipodium membrane. It is found in the cell junction. Its subcellular location is the membrane raft. It carries out the reaction Release of an N-terminal dipeptide, Xaa-Yaa-|-Zaa-, from a polypeptide, preferentially when Yaa is Pro, provided Zaa is neither Pro nor hydroxyproline.. Inhibited by GPC3 and diprotin A. Its function is as follows. Cell surface glycoprotein receptor involved in the costimulatory signal essential for T-cell receptor (TCR)-mediated T-cell activation. Acts as a positive regulator of T-cell coactivation, by binding at least ADA, CAV1, IGF2R, and PTPRC. Its binding to CAV1 and CARD11 induces T-cell proliferation and NF-kappa-B activation in a T-cell receptor/CD3-dependent manner. Its interaction with ADA also regulates lymphocyte-epithelial cell adhesion. In association with FAP is involved in the pericellular proteolysis of the extracellular matrix (ECM), the migration and invasion of endothelial cells into the ECM. May be involved in the promotion of lymphatic endothelial cells adhesion, migration and tube formation. When overexpressed, enhanced cell proliferation, a process inhibited by GPC3. Also acts as a serine exopeptidase with a dipeptidyl peptidase activity that regulates various physiological processes by cleaving peptides in the circulation, including many chemokines, mitogenic growth factors, neuropeptides and peptide hormones. Removes N-terminal dipeptides sequentially from polypeptides having unsubstituted N-termini provided that the penultimate residue is proline. The chain is Dipeptidyl peptidase 4 (DPP4) from Bos taurus (Bovine).